Consider the following 86-residue polypeptide: Putative defensin-like protein 189 (86 aa).

The signal sequence occupies residues 1–28 (MKMAKSANEIGFITCLVVFLVLTGQSNG). Intrachain disulfides connect cysteine 39/cysteine 85, cysteine 52/cysteine 71, cysteine 57/cysteine 80, and cysteine 61/cysteine 82.

This sequence belongs to the DEFL family.

The protein resides in the secreted. The chain is Putative defensin-like protein 189 from Arabidopsis thaliana (Mouse-ear cress).